A 404-amino-acid chain; its full sequence is Cysteine desulfurase IscS (404 aa).

Pyridoxal 5'-phosphate contacts are provided by residues 75-76 (AT), N155, Q183, and 203-205 (SAH). K206 bears the N6-(pyridoxal phosphate)lysine mark. T243 is a pyridoxal 5'-phosphate binding site. The Cysteine persulfide intermediate role is filled by C328. C328 contributes to the [2Fe-2S] cluster binding site.

It belongs to the class-V pyridoxal-phosphate-dependent aminotransferase family. NifS/IscS subfamily. Homodimer. Forms a heterotetramer with IscU, interacts with other sulfur acceptors. It depends on pyridoxal 5'-phosphate as a cofactor.

It localises to the cytoplasm. It catalyses the reaction (sulfur carrier)-H + L-cysteine = (sulfur carrier)-SH + L-alanine. It functions in the pathway cofactor biosynthesis; iron-sulfur cluster biosynthesis. Functionally, master enzyme that delivers sulfur to a number of partners involved in Fe-S cluster assembly, tRNA modification or cofactor biosynthesis. Catalyzes the removal of elemental sulfur atoms from cysteine to produce alanine. Functions as a sulfur delivery protein for Fe-S cluster synthesis onto IscU, an Fe-S scaffold assembly protein, as well as other S acceptor proteins. The sequence is that of Cysteine desulfurase IscS from Pseudomonas fluorescens (strain Pf0-1).